The sequence spans 780 residues: TSC22 domain family protein 2 (780 aa).

Disordered regions lie at residues 20–86 (AQVA…TVSP), 126–158 (TSAPAPGAPGGPQLAGSSAGPVTAAPSQPPTTC), 235–499 (AHGP…PGGP), 587–607 (LVGQVDDTRRKSEPLPQPPLS), and 736–780 (LSSN…VSSA). Positions 28–37 (EDTESLDDPD) are enriched in acidic residues. Over residues 126 to 146 (TSAPAPGAPGGPQLAGSSAGP) the composition is skewed to low complexity. Residues 241-262 (GTDSSLTAVSQLPPSEKMSQPT) are compositionally biased toward polar residues. Low complexity-rich tracts occupy residues 297-316 (GAATGPQPMMAAAQPSQPQG), 344-361 (PAVGAPAAQQPQQFAYPQ), and 395-412 (QPSSTGAAASPATAATLP). The span at 415–434 (TGQNASSVGAQLMGASSQPS) shows a compositional bias: polar residues. Over residues 453 to 468 (QPTGVPPATVGGVVQP) the composition is skewed to low complexity. Positions 736-756 (LSSNDQLSQLPTQQANPGSTS) are enriched in polar residues. A compositionally biased stretch (pro residues) spans 765 to 774 (PPQPTQPPQQ).

Belongs to the TSC-22/Dip/Bun family. As to quaternary structure, interacts with NRBP1. Interacts with PKM isoform M2; the interaction results in reduced nuclear levels of PKM isoform M2, leading to repression of cyclin CCND1 transcription and reduced cell growth. Interacts with WDR77.

Reduces the level of nuclear PKM isoform M2 which results in repression of cyclin CCND1 transcription and reduced cell growth. This is TSC22 domain family protein 2 from Homo sapiens (Human).